A 314-amino-acid polypeptide reads, in one-letter code: Lipoyl synthase (314 aa).

7 residues coordinate [4Fe-4S] cluster: Cys67, Cys72, Cys78, Cys93, Cys97, Cys100, and Ser306. One can recognise a Radical SAM core domain in the interval 79 to 295; that stretch reads FNRGTATFMI…KNYALSIGFK (217 aa).

The protein belongs to the radical SAM superfamily. Lipoyl synthase family. It depends on [4Fe-4S] cluster as a cofactor.

It localises to the cytoplasm. It carries out the reaction [[Fe-S] cluster scaffold protein carrying a second [4Fe-4S](2+) cluster] + N(6)-octanoyl-L-lysyl-[protein] + 2 oxidized [2Fe-2S]-[ferredoxin] + 2 S-adenosyl-L-methionine + 4 H(+) = [[Fe-S] cluster scaffold protein] + N(6)-[(R)-dihydrolipoyl]-L-lysyl-[protein] + 4 Fe(3+) + 2 hydrogen sulfide + 2 5'-deoxyadenosine + 2 L-methionine + 2 reduced [2Fe-2S]-[ferredoxin]. Its pathway is protein modification; protein lipoylation via endogenous pathway; protein N(6)-(lipoyl)lysine from octanoyl-[acyl-carrier-protein]: step 2/2. Its function is as follows. Catalyzes the radical-mediated insertion of two sulfur atoms into the C-6 and C-8 positions of the octanoyl moiety bound to the lipoyl domains of lipoate-dependent enzymes, thereby converting the octanoylated domains into lipoylated derivatives. The polypeptide is Lipoyl synthase (Buchnera aphidicola subsp. Baizongia pistaciae (strain Bp)).